The chain runs to 1144 residues: Type II inositol polyphosphate 5-phosphatase 14 (1144 aa).

2 disordered regions span residues 15-67 (ASLV…FDSS) and 81-118 (GRTS…DDIE). WD repeat units lie at residues 158-196 (ETQT…EVGC), 216-255 (VPTS…TTTA), 269-307 (AHRG…KSLV), 445-483 (EDTR…LREV), and 524-561 (SHNE…PLDS). Catalytic regions lie at residues 791-807 (DLVA…FGIT) and 870-885 (KKRI…YRDN). Residue K949 forms a Glycyl lysine isopeptide (Lys-Gly) (interchain with G-Cter in ubiquitin) linkage. Residues 1111–1131 (TTMTKNLEGSTRYQTDANRGG) are compositionally biased toward polar residues. The tract at residues 1111-1144 (TTMTKNLEGSTRYQTDANRGGSTRHRTDDSTRRG) is disordered. Positions 1135–1144 (HRTDDSTRRG) are enriched in basic and acidic residues.

Belongs to the inositol polyphosphate 5-phosphatase family. It depends on Mg(2+) as a cofactor. In terms of tissue distribution, expressed in young seedlings and flowers.

It carries out the reaction a 1,2-diacyl-sn-glycero-3-phospho-(1D-myo-inositol-4,5-bisphosphate) + H2O = a 1,2-diacyl-sn-glycero-3-phospho-(1D-myo-inositol 4-phosphate) + phosphate. The enzyme catalyses a 1,2-diacyl-sn-glycero-3-phospho-(1D-myo-inositol-3,4,5-trisphosphate) + H2O = a 1,2-diacyl-sn-glycero-3-phospho-(1D-myo-inositol-3,4-bisphosphate) + phosphate. It catalyses the reaction 1D-myo-inositol 1,4,5-trisphosphate + H2O = 1D-myo-inositol 1,4-bisphosphate + phosphate. Functionally, has phosphatase activity toward PtdIns(4,5)P2, PtdIns(3,4,5)P3 and Ins(1,4,5)P3. This chain is Type II inositol polyphosphate 5-phosphatase 14, found in Arabidopsis thaliana (Mouse-ear cress).